A 334-amino-acid chain; its full sequence is Serine/Arginine-related protein 53 (334 aa).

Residues 1-13 (MGRRSSDTEEESR) show a composition bias toward basic and acidic residues. Disordered stretches follow at residues 1 to 179 (MGRR…HLPP), 198 to 220 (DEAL…EDQA), and 246 to 290 (RSSK…SIPT). Basic residues predominate over residues 14–24 (SKRKKKHRRRS). The span at 44–62 (PRSDSRSWSRDRQLRSHSY) shows a compositional bias: basic and acidic residues. Residues 78 to 118 (SRRKRSRSRSRGRGKPYRVQRSRSKSRTRRSRSRPRPRSHS) are compositionally biased toward basic residues. 3 stretches are compositionally biased toward basic and acidic residues: residues 132–166 (RSRD…KRGD), 198–218 (DEAL…KEED), and 247–256 (SSKDVKKAVE). Residues 180 to 236 (AEQAKARLQLVLEAAAKADEALKAKERSEEEAKRRKEEDQATLVEQVKRVKEIEAIE) adopt a coiled-coil conformation. The span at 265–278 (AASGPASAAAEPPS) shows a compositional bias: low complexity.

Interacts (via Arg/Ser-rich domain) with LUC7L3, RBM39 and RSF1. In terms of processing, phosphorylated.

The protein resides in the nucleus. Its subcellular location is the nucleus speckle. It is found in the cytoplasm. In terms of biological role, plays a role in pre-mRNA splicing. Involved in both constitutive and alternative pre-mRNA splicing. May have a role in the recognition of the 3' splice site during the second step of splicing. The protein is Serine/Arginine-related protein 53 (Rsrc1) of Mus musculus (Mouse).